Reading from the N-terminus, the 379-residue chain is Cobalt-precorrin-5B C(1)-methyltransferase (379 aa).

It belongs to the CbiD family.

It carries out the reaction Co-precorrin-5B + S-adenosyl-L-methionine = Co-precorrin-6A + S-adenosyl-L-homocysteine. Its pathway is cofactor biosynthesis; adenosylcobalamin biosynthesis; cob(II)yrinate a,c-diamide from sirohydrochlorin (anaerobic route): step 6/10. Its function is as follows. Catalyzes the methylation of C-1 in cobalt-precorrin-5B to form cobalt-precorrin-6A. This Cyanothece sp. (strain PCC 7425 / ATCC 29141) protein is Cobalt-precorrin-5B C(1)-methyltransferase.